Reading from the N-terminus, the 418-residue chain is Trans-acting enoyl reductase (418 aa).

This sequence belongs to the saccharopine dehydrogenase family. Enoyl reductase subfamily.

Functionally, involved in the reduction of the double bond between C-4 and C-5 during phthiocerol dimycocerosates (DIM A) and glycosylated phenolphthiocerol dimycocerosates (PGL) biosynthesis. In Mycobacterium ulcerans (strain Agy99), this protein is Trans-acting enoyl reductase.